A 428-amino-acid chain; its full sequence is Dihydroorotase (428 aa).

His59 and His61 together coordinate Zn(2+). Substrate contacts are provided by residues 61–63 (HLR) and Asn93. Zn(2+) contacts are provided by Asp151, His178, and His231. Position 277 (Asn277) interacts with substrate. Asp304 provides a ligand contact to Zn(2+). The active site involves Asp304. Residues His308 and 322–323 (FG) contribute to the substrate site.

This sequence belongs to the metallo-dependent hydrolases superfamily. DHOase family. Class I DHOase subfamily. The cofactor is Zn(2+).

The catalysed reaction is (S)-dihydroorotate + H2O = N-carbamoyl-L-aspartate + H(+). The protein operates within pyrimidine metabolism; UMP biosynthesis via de novo pathway; (S)-dihydroorotate from bicarbonate: step 3/3. In terms of biological role, catalyzes the reversible cyclization of carbamoyl aspartate to dihydroorotate. The sequence is that of Dihydroorotase from Bacillus cereus (strain ATCC 14579 / DSM 31 / CCUG 7414 / JCM 2152 / NBRC 15305 / NCIMB 9373 / NCTC 2599 / NRRL B-3711).